The following is a 338-amino-acid chain: L-asparaginase 1 (338 aa).

The 326-residue stretch at 4–329 (KSIYVAYTGG…ETIRKAMSQN (326 aa)) folds into the Asparaginase/glutaminase domain. T14 (O-isoaspartyl threonine intermediate) is an active-site residue. Substrate-binding positions include 59-61 (DSS) and 91-92 (TD).

It belongs to the asparaginase 1 family. Homotetramer.

It localises to the cytoplasm. The enzyme catalyses L-asparagine + H2O = L-aspartate + NH4(+). The sequence is that of L-asparaginase 1 (ansA) from Escherichia coli O157:H7.